Here is a 472-residue protein sequence, read N- to C-terminus: 3-isopropylmalate dehydratase large subunit (472 aa).

The interval 61-80 (TPDHNVPTTQKERASGVEGI) is disordered. 3 residues coordinate [4Fe-4S] cluster: Cys353, Cys414, and Cys417.

The protein belongs to the aconitase/IPM isomerase family. LeuC type 1 subfamily. In terms of assembly, heterodimer of LeuC and LeuD. The cofactor is [4Fe-4S] cluster.

The enzyme catalyses (2R,3S)-3-isopropylmalate = (2S)-2-isopropylmalate. Its pathway is amino-acid biosynthesis; L-leucine biosynthesis; L-leucine from 3-methyl-2-oxobutanoate: step 2/4. Its function is as follows. Catalyzes the isomerization between 2-isopropylmalate and 3-isopropylmalate, via the formation of 2-isopropylmaleate. The chain is 3-isopropylmalate dehydratase large subunit from Saccharophagus degradans (strain 2-40 / ATCC 43961 / DSM 17024).